A 117-amino-acid polypeptide reads, in one-letter code: Large ribosomal subunit protein bL20 (117 aa).

Belongs to the bacterial ribosomal protein bL20 family.

Binds directly to 23S ribosomal RNA and is necessary for the in vitro assembly process of the 50S ribosomal subunit. It is not involved in the protein synthesizing functions of that subunit. This Maridesulfovibrio salexigens (strain ATCC 14822 / DSM 2638 / NCIMB 8403 / VKM B-1763) (Desulfovibrio salexigens) protein is Large ribosomal subunit protein bL20.